We begin with the raw amino-acid sequence, 781 residues long: Probable beta-D-xylosidase 5 (781 aa).

The signal sequence occupies residues 1–23 (MSIRRFVRLSLLIIALVSSLCES). N-linked (GlcNAc...) asparagine glycans are attached at residues Asn-43, Asn-103, and Asn-123. Asp-291 is a catalytic residue. N-linked (GlcNAc...) asparagine glycans are attached at residues Asn-342, Asn-424, Asn-504, Asn-543, Asn-601, and Asn-653.

The protein belongs to the glycosyl hydrolase 3 family.

It localises to the secreted. The protein localises to the extracellular space. Its subcellular location is the extracellular matrix. The protein is Probable beta-D-xylosidase 5 (BXL5) of Arabidopsis thaliana (Mouse-ear cress).